The sequence spans 333 residues: Ketol-acid reductoisomerase (NADP(+)) (333 aa).

A KARI N-terminal Rossmann domain is found at 1–171 (MSNHTQPKIA…GGARANIIKT (171 aa)). Residues 14 to 17 (YGSQ), Arg-37, Thr-42, and 72 to 75 (DMVQ) contribute to the NADP(+) site. His-97 is an active-site residue. NADP(+) is bound at residue Gly-123. Residues 172 to 317 (TFKEETETDL…KKLRAKMVWL (146 aa)) form the KARI C-terminal knotted domain. Residues Asp-180, Glu-184, Glu-216, and Glu-220 each contribute to the Mg(2+) site. Ser-241 provides a ligand contact to substrate.

The protein belongs to the ketol-acid reductoisomerase family. It depends on Mg(2+) as a cofactor.

It catalyses the reaction (2R)-2,3-dihydroxy-3-methylbutanoate + NADP(+) = (2S)-2-acetolactate + NADPH + H(+). It carries out the reaction (2R,3R)-2,3-dihydroxy-3-methylpentanoate + NADP(+) = (S)-2-ethyl-2-hydroxy-3-oxobutanoate + NADPH + H(+). The protein operates within amino-acid biosynthesis; L-isoleucine biosynthesis; L-isoleucine from 2-oxobutanoate: step 2/4. It participates in amino-acid biosynthesis; L-valine biosynthesis; L-valine from pyruvate: step 2/4. Functionally, involved in the biosynthesis of branched-chain amino acids (BCAA). Catalyzes an alkyl-migration followed by a ketol-acid reduction of (S)-2-acetolactate (S2AL) to yield (R)-2,3-dihydroxy-isovalerate. In the isomerase reaction, S2AL is rearranged via a Mg-dependent methyl migration to produce 3-hydroxy-3-methyl-2-ketobutyrate (HMKB). In the reductase reaction, this 2-ketoacid undergoes a metal-dependent reduction by NADPH to yield (R)-2,3-dihydroxy-isovalerate. This chain is Ketol-acid reductoisomerase (NADP(+)), found in Xanthomonas axonopodis pv. citri (strain 306).